Reading from the N-terminus, the 330-residue chain is Protein pelota homolog (330 aa).

It belongs to the eukaryotic release factor 1 family. Pelota subfamily. In terms of assembly, monomer. The cofactor is a divalent metal cation.

It localises to the cytoplasm. In terms of biological role, may function in recognizing stalled ribosomes, interact with stem-loop structures in stalled mRNA molecules, and effect endonucleolytic cleavage of the mRNA. May play a role in the release non-functional ribosomes and degradation of damaged mRNAs. Has endoribonuclease activity. In Pyrobaculum islandicum (strain DSM 4184 / JCM 9189 / GEO3), this protein is Protein pelota homolog.